We begin with the raw amino-acid sequence, 134 residues long: Retinol-binding protein 2 (134 aa).

The all-trans-retinol site is built by Lys41 and Gln109.

The protein belongs to the calycin superfamily. Fatty-acid binding protein (FABP) family. As to expression, higher expression in adult small intestine and to a much lesser extent in fetal kidney.

It localises to the cytoplasm. Intracellular transport of retinol. The chain is Retinol-binding protein 2 (RBP2) from Homo sapiens (Human).